Consider the following 264-residue polypeptide: 1-acyl-sn-glycerol-3-phosphate acyltransferase (264 aa).

The chain crosses the membrane as a helical span at residues 16 to 36 (MFYTYLRGLVVLLLWSINGNA). The HXXXXD motif motif lies at 57 to 62 (HRTWWD). The helical transmembrane segment at 233–253 (LILAIILAILTIIFSFIASFI) threads the bilayer.

It belongs to the 1-acyl-sn-glycerol-3-phosphate acyltransferase family.

It is found in the membrane. The catalysed reaction is a fatty acyl-[ACP] + a 1-acyl-sn-glycero-3-phosphate = a 1,2-diacyl-sn-glycero-3-phosphate + holo-[ACP]. The enzyme catalyses hexadecanoyl-[ACP] + 1-hexadecanoyl-sn-glycero-3-phosphate = 1,2-dihexadecanoyl-sn-glycero-3-phosphate + holo-[ACP]. Its pathway is lipid metabolism; phospholipid metabolism. Functionally, converts lysophosphatidic acid (LPA) into phosphatidic acid (PA) by incorporating an acyl moiety at the 2 position. This enzyme utilizes acyl-ACP as fatty acyl donor, but not acyl-CoA. The sequence is that of 1-acyl-sn-glycerol-3-phosphate acyltransferase (plsC) from Streptococcus pneumoniae (strain ATCC BAA-255 / R6).